A 115-amino-acid chain; its full sequence is Large ribosomal subunit protein bL20 (115 aa).

It belongs to the bacterial ribosomal protein bL20 family.

In terms of biological role, binds directly to 23S ribosomal RNA and is necessary for the in vitro assembly process of the 50S ribosomal subunit. It is not involved in the protein synthesizing functions of that subunit. This chain is Large ribosomal subunit protein bL20, found in Prochlorococcus marinus (strain SARG / CCMP1375 / SS120).